The sequence spans 552 residues: Arginine--tRNA ligase (552 aa).

The short motif at A123–R133 is the 'HIGH' region element.

It belongs to the class-I aminoacyl-tRNA synthetase family. Monomer.

The protein resides in the cytoplasm. The catalysed reaction is tRNA(Arg) + L-arginine + ATP = L-arginyl-tRNA(Arg) + AMP + diphosphate. The chain is Arginine--tRNA ligase from Pelodictyon phaeoclathratiforme (strain DSM 5477 / BU-1).